Consider the following 847-residue polypeptide: Cancer-associated gene 1 protein homolog (847 aa).

The disordered stretch occupies residues 118 to 161 (EEKPELQSQVYNDPADASQKPDPLKEESLMESSTSENKDELVHE). Residues 377-567 (NVILEKNDIN…AAKREAQACT (191 aa)) adopt a coiled-coil conformation.

This is Cancer-associated gene 1 protein homolog (Cage1) from Rattus norvegicus (Rat).